Consider the following 245-residue polypeptide: Probable transcriptional regulatory protein Ddes_0536 (245 aa).

The segment at 1-21 (MAGHSKWANIQHRKGRQDAKR) is disordered.

The protein belongs to the TACO1 family.

The protein localises to the cytoplasm. The protein is Probable transcriptional regulatory protein Ddes_0536 of Desulfovibrio desulfuricans (strain ATCC 27774 / DSM 6949 / MB).